The following is a 260-amino-acid chain: MSEARHNPVLAGQTAVITGGASGIGKSIVQRFLEAGASCLAADLNEEALAALKQELAEYGDKLDVVKVDVSNRDDVEGMVDRAVQTFGQMDIIVNNAGIMDNLLPIAEMDDDVWERLMKVNLNSVMYGTRKAVRYFMERGEGGVIINTASLSGLCAGRGGCAYTASKFAVVGLTKNVAFMYADTGIRCNAICPGNTQTNIGVGMRQPSERGMAKATTGYAGATRSGTPEEISAAAAFLASDQAGFINGETLTIDGGWSAY.

Residues Asp43, 69–70, Asn96, Tyr163, and Lys167 each bind NAD(+); that span reads DV. Tyr163 functions as the Proton acceptor in the catalytic mechanism.

Belongs to the short-chain dehydrogenases/reductases (SDR) family.

The catalysed reaction is 3-oxo-5beta-cholan-24-oate + NADH + H(+) = isolithocholate + NAD(+). It carries out the reaction 12alpha-hydroxy-3-oxo-5beta-cholan-24-oate + NADH + H(+) = isodeoxycholate + NAD(+). It catalyses the reaction 12alpha-hydroxy-3-oxo-5beta-cholan-24-oate + NADPH + H(+) = isodeoxycholate + NADP(+). The enzyme catalyses 7alpha,12alpha-dihydroxy-3-oxo-5beta-cholan-24-oate + NADH + H(+) = isocholate + NAD(+). The catalysed reaction is 3-oxochenodeoxycholate + NADH + H(+) = isochenodeoxycholate + NAD(+). Involved in the modification of secondary bile acids into iso-bile acids (3beta-bile acids) via epimerization of the 3-OH group through a 3-oxo-intermediate. Catalyzes the reduction of 12-alpha-hydroxy-3-oxo-5-beta-cholan-24-oate (3-oxo-DCA) and 3-oxo-5-beta-cholan-24-oate (3-oxo-LCA) to yield isodeoxycholate (isoDCA) and isolithocholate (isoLCA), respectively. Is also able to catalyze the reduction of 3-dehydrocholate (3-oxo-CA or 7alpha,12alpha-dihydroxy-3-oxo-5beta-cholan-24-oate) and 7-alpha-hydroxy-3-oxo-5-beta-cholan-24-oate (3-oxo-CDCA), into isocholate (isoCA) and isochenodeoxycholate (isoCDCA), respectively. Accepts both NADH and NADPH as cosubstrates. The conversion of the abundant bile acid deoxycholate (DCA) into isoDCA by the gut bacterium E.lenta favors the growth of the keystone commensal genus Bacteroides, since isoDCA is less cytotoxic than its parent compound, DCA; iso-bile acids have thus a potential role in modulating gut community composition. The polypeptide is 3beta-hydroxysteroid dehydrogenase 2 (Eggerthella lenta (strain ATCC 25559 / DSM 2243 / CCUG 17323 / JCM 9979 / KCTC 3265 / NCTC 11813 / VPI 0255 / 1899 B) (Eubacterium lentum)).